We begin with the raw amino-acid sequence, 334 residues long: Biotin synthase (334 aa).

Residues 55-285 enclose the Radical SAM core domain; sequence GSSGSIHACS…VHPRKIIKIA (231 aa). Residues Cys73, Cys77, and Cys80 each contribute to the [4Fe-4S] cluster site. [2Fe-2S] cluster is bound by residues Cys152, Cys213, and Lys283.

Belongs to the radical SAM superfamily. Biotin synthase family. In terms of assembly, homodimer. [4Fe-4S] cluster is required as a cofactor. The cofactor is [2Fe-2S] cluster.

The enzyme catalyses (4R,5S)-dethiobiotin + (sulfur carrier)-SH + 2 reduced [2Fe-2S]-[ferredoxin] + 2 S-adenosyl-L-methionine = (sulfur carrier)-H + biotin + 2 5'-deoxyadenosine + 2 L-methionine + 2 oxidized [2Fe-2S]-[ferredoxin]. Its pathway is cofactor biosynthesis; biotin biosynthesis; biotin from 7,8-diaminononanoate: step 2/2. Its function is as follows. Catalyzes the conversion of dethiobiotin (DTB) to biotin by the insertion of a sulfur atom into dethiobiotin via a radical-based mechanism. The protein is Biotin synthase of Chlorobium phaeobacteroides (strain DSM 266 / SMG 266 / 2430).